Here is a 162-residue protein sequence, read N- to C-terminus: uncharacterized protein (162 aa).

Helical transmembrane passes span 28 to 50 (ALAL…VCFF), 57 to 76 (LLLL…DPWL), and 108 to 130 (YNTM…YALA).

Its subcellular location is the cell membrane. This is an uncharacterized protein from Treponema pallidum (strain Nichols).